The chain runs to 582 residues: tRNA(Ile)-lysidine synthase (582 aa).

46–51 is a binding site for ATP; the sequence is SGGADS. Residues 402–525 form the CMP/dCMP-type deaminase domain; sequence DPLHAAMGEA…DLLADHWGWR (124 aa). Residues 548–582 are disordered; that stretch reads VRRRSADTPQTPNAETPAPRSSRSTSASGKPTMLE. The segment covering 563-575 has biased composition (low complexity); the sequence is TPAPRSSRSTSAS.

It belongs to the tRNA(Ile)-lysidine synthase family.

It is found in the cytoplasm. The enzyme catalyses cytidine(34) in tRNA(Ile2) + L-lysine + ATP = lysidine(34) in tRNA(Ile2) + AMP + diphosphate + H(+). In terms of biological role, ligates lysine onto the cytidine present at position 34 of the AUA codon-specific tRNA(Ile) that contains the anticodon CAU, in an ATP-dependent manner. Cytidine is converted to lysidine, thus changing the amino acid specificity of the tRNA from methionine to isoleucine. The sequence is that of tRNA(Ile)-lysidine synthase from Deinococcus radiodurans (strain ATCC 13939 / DSM 20539 / JCM 16871 / CCUG 27074 / LMG 4051 / NBRC 15346 / NCIMB 9279 / VKM B-1422 / R1).